The sequence spans 814 residues: Putative E3 ubiquitin-protein ligase RF298 (814 aa).

Disordered regions lie at residues 1–51, 221–301, and 411–441; these read MVEK…ASLT, SVSN…TKSA, and ALPA…STKP. Residues 221-231 are compositionally biased toward low complexity; it reads SVSNASKSSES. Positions 289–301 are enriched in polar residues; it reads SVSTASGEGTKSA. The span at 423–435 shows a compositional bias: basic and acidic residues; it reads SEKKSGSEPEEKP. Positions 506-710 form a coiled coil; it reads ELKALRKEKE…KLKSDSLKIA (205 aa). The RING-type zinc finger occupies 760–800; that stretch reads CVMCLSEEMSVIFLPCAHQVLCSKCNQLHEKEAMEDCPSCR.

It belongs to the RING-type zinc finger family.

The catalysed reaction is S-ubiquitinyl-[E2 ubiquitin-conjugating enzyme]-L-cysteine + [acceptor protein]-L-lysine = [E2 ubiquitin-conjugating enzyme]-L-cysteine + N(6)-ubiquitinyl-[acceptor protein]-L-lysine.. The protein operates within protein modification; protein ubiquitination. The chain is Putative E3 ubiquitin-protein ligase RF298 (RF298) from Arabidopsis thaliana (Mouse-ear cress).